Consider the following 128-residue polypeptide: uncharacterized protein (128 aa).

The segment at 1–50 is disordered; the sequence is MSNEQGKGMGFFGNKGKPASEKKDEKKTKLDLDYKPDLNPSTPYDPTLPV. Over residues 18–36 the composition is skewed to basic and acidic residues; that stretch reads PASEKKDEKKTKLDLDYKP.

This is an uncharacterized protein from Bacillus anthracis.